Here is a 610-residue protein sequence, read N- to C-terminus: Elongation factor 4 (610 aa).

The 183-residue stretch at 11–193 folds into the tr-type G domain; sequence EKIRNFSIIA…QIVEKVPAPT (183 aa). Residues 23-28 and 140-143 contribute to the GTP site; these read DHGKST and NKID.

It belongs to the TRAFAC class translation factor GTPase superfamily. Classic translation factor GTPase family. LepA subfamily.

It localises to the cell membrane. It catalyses the reaction GTP + H2O = GDP + phosphate + H(+). Its function is as follows. Required for accurate and efficient protein synthesis under certain stress conditions. May act as a fidelity factor of the translation reaction, by catalyzing a one-codon backward translocation of tRNAs on improperly translocated ribosomes. Back-translocation proceeds from a post-translocation (POST) complex to a pre-translocation (PRE) complex, thus giving elongation factor G a second chance to translocate the tRNAs correctly. Binds to ribosomes in a GTP-dependent manner. The protein is Elongation factor 4 of Streptococcus pyogenes serotype M2 (strain MGAS10270).